The sequence spans 228 residues: U1 small nuclear ribonucleoprotein C-2 (228 aa).

A Matrin-type zinc finger spans residues 4–36 (YYCDYCDTYLTHDSPSVRKQHNAGYKHKANVRT). Residues 105-228 (PGVRPPILPA…SYALPSEGNH (124 aa)) are disordered. Composition is skewed to pro residues over residues 107–156 (VRPP…PPGS) and 164–175 (LPRPPTLPPPTS). Over residues 178–190 (PGAPIPNSAAPPA) the composition is skewed to low complexity. The span at 196–214 (PPAPAGPTSGAPPAPPTAP) shows a compositional bias: pro residues.

The protein belongs to the U1 small nuclear ribonucleoprotein C family. In terms of assembly, U1 snRNP is composed of the 7 core Sm proteins B/B', D1, D2, D3, E, F and G that assemble in a heptameric protein ring on the Sm site of the small nuclear RNA to form the core snRNP, and at least 3 U1 snRNP-specific proteins U1-70K, U1-A and U1-C. U1-C interacts with U1 snRNA and the 5' splice-site region of the pre-mRNA.

The protein resides in the nucleus. Its function is as follows. Component of the spliceosomal U1 snRNP, which is essential for recognition of the pre-mRNA 5' splice-site and the subsequent assembly of the spliceosome. U1-C is directly involved in initial 5' splice-site recognition for both constitutive and regulated alternative splicing. The interaction with the 5' splice-site seems to precede base-pairing between the pre-mRNA and the U1 snRNA. Stimulates commitment or early (E) complex formation by stabilizing the base pairing of the 5' end of the U1 snRNA and the 5' splice-site region. The chain is U1 small nuclear ribonucleoprotein C-2 from Sorghum bicolor (Sorghum).